The sequence spans 93 residues: Protein FMP16, mitochondrial (93 aa).

A mitochondrion-targeting transit peptide spans 1-25 (MLRTTFLRTPRQLMRKSPRASFSIV). The disordered stretch occupies residues 30–93 (FPHLKNNQDE…EQNRPDDGVY (64 aa)). Positions 35 to 93 (NNQDEAEKKEQGLFDSNKKRLDTLEHGKNPDYKQPGMEDLKKKGDDARIEQNRPDDGVY) are enriched in basic and acidic residues.

Its subcellular location is the mitochondrion. The sequence is that of Protein FMP16, mitochondrial (FMP16) from Saccharomyces cerevisiae (strain ATCC 204508 / S288c) (Baker's yeast).